Consider the following 111-residue polypeptide: Large ribosomal subunit protein uL23 (111 aa).

The protein belongs to the universal ribosomal protein uL23 family. In terms of assembly, part of the 50S ribosomal subunit. Contacts protein L29, and trigger factor when it is bound to the ribosome.

In terms of biological role, one of the early assembly proteins it binds 23S rRNA. One of the proteins that surrounds the polypeptide exit tunnel on the outside of the ribosome. Forms the main docking site for trigger factor binding to the ribosome. This Chlamydia abortus (strain DSM 27085 / S26/3) (Chlamydophila abortus) protein is Large ribosomal subunit protein uL23.